Reading from the N-terminus, the 51-residue chain is uncharacterized protein (51 aa).

Residues 1–51 are disordered; the sequence is MKRKAEVNEAIKNNNTPTESMDPNSYKTQYHDDPNFRGANRNSKQGQQGGM. Composition is skewed to polar residues over residues 11–28 and 40–51; these read IKNN…SYKT and NRNSKQGQQGGM.

This is an uncharacterized protein from Bacillus subtilis (strain 168).